We begin with the raw amino-acid sequence, 172 residues long: Adenine phosphoribosyltransferase (172 aa).

Belongs to the purine/pyrimidine phosphoribosyltransferase family. As to quaternary structure, homodimer.

Its subcellular location is the cytoplasm. It carries out the reaction AMP + diphosphate = 5-phospho-alpha-D-ribose 1-diphosphate + adenine. It functions in the pathway purine metabolism; AMP biosynthesis via salvage pathway; AMP from adenine: step 1/1. Functionally, catalyzes a salvage reaction resulting in the formation of AMP, that is energically less costly than de novo synthesis. The chain is Adenine phosphoribosyltransferase from Lactiplantibacillus plantarum (strain ATCC BAA-793 / NCIMB 8826 / WCFS1) (Lactobacillus plantarum).